Reading from the N-terminus, the 135-residue chain is ATP synthase epsilon chain, chloroplastic (135 aa).

Belongs to the ATPase epsilon chain family. In terms of assembly, F-type ATPases have 2 components, CF(1) - the catalytic core - and CF(0) - the membrane proton channel. CF(1) has five subunits: alpha(3), beta(3), gamma(1), delta(1), epsilon(1). CF(0) has three main subunits: a, b and c.

Its subcellular location is the plastid. It is found in the chloroplast thylakoid membrane. Functionally, produces ATP from ADP in the presence of a proton gradient across the membrane. This chain is ATP synthase epsilon chain, chloroplastic, found in Stigeoclonium helveticum (Green alga).